We begin with the raw amino-acid sequence, 90 residues long: N(2)-fixation sustaining protein CowN (90 aa).

It belongs to the CowN family.

Its function is as follows. Is required to sustain N(2)-dependent growth in the presence of low levels of carbon monoxide (CO). Probably acts by protecting the N(2) fixation ability of the nitrogenase complex, which is inactivated in the presence of CO. This is N(2)-fixation sustaining protein CowN from Methylocella silvestris (strain DSM 15510 / CIP 108128 / LMG 27833 / NCIMB 13906 / BL2).